Consider the following 314-residue polypeptide: Endolytic peptidoglycan transglycosylase RlpA (314 aa).

The N-terminal stretch at 1–19 (MGWALKKVCFLGVIFLISA) is a signal peptide. Cysteine 20 carries N-palmitoyl cysteine lipidation. Cysteine 20 carries the S-diacylglycerol cysteine lipid modification. The region spanning 241-314 (SVSGGKFSLQ…YNQNAVLTRE (74 aa)) is the SPOR domain.

Belongs to the RlpA family.

Its subcellular location is the cell membrane. Functionally, lytic transglycosylase with a strong preference for naked glycan strands that lack stem peptides. The polypeptide is Endolytic peptidoglycan transglycosylase RlpA (Helicobacter pylori (strain J99 / ATCC 700824) (Campylobacter pylori J99)).